Here is a 119-residue protein sequence, read N- to C-terminus: Large ribosomal subunit protein uL18 (119 aa).

It belongs to the universal ribosomal protein uL18 family. Part of the 50S ribosomal subunit; part of the 5S rRNA/L5/L18/L25 subcomplex. Contacts the 5S and 23S rRNAs.

This is one of the proteins that bind and probably mediate the attachment of the 5S RNA into the large ribosomal subunit, where it forms part of the central protuberance. In Xanthomonas campestris pv. campestris (strain 8004), this protein is Large ribosomal subunit protein uL18.